Here is a 117-residue protein sequence, read N- to C-terminus: Hemerythrin subunit alpha (117 aa).

7 residues coordinate Fe cation: H24, H53, E57, H72, H76, H105, and D110.

It belongs to the hemerythrin family. Octamer composed of two types of chains: alpha and beta.

Functionally, hemerythrin is a respiratory protein in blood cells of certain marine worms. The oxygen-binding site in each chain contains two iron atoms. The sequence is that of Hemerythrin subunit alpha from Lingula anatina (Brachiopod).